The sequence spans 154 residues: Toxin YhaV (154 aa).

Homohexamer; forms a complex with PrlF (SohA) with stoichiometry PrlF(2)-YhaV(4), possibly as a YhaV(2)-PrlF(2)-YhaV(2) complex like the MazFE complex. May dimerize in solution.

Its function is as follows. Toxic component of a type II toxin-antitoxin (TA) system. Has RNase activity in vitro. Acts as a transcription factor. The YhaV/PrlF complex binds the prlF-yhaV operon, probably negatively regulating its expression. This chain is Toxin YhaV (yhaV), found in Escherichia coli O157:H7.